The sequence spans 406 residues: Phosphopentomutase (406 aa).

Mn(2+) contacts are provided by aspartate 10, aspartate 305, histidine 310, aspartate 346, histidine 347, and histidine 358.

Belongs to the phosphopentomutase family. Mn(2+) is required as a cofactor.

The protein localises to the cytoplasm. It carries out the reaction 2-deoxy-alpha-D-ribose 1-phosphate = 2-deoxy-D-ribose 5-phosphate. The catalysed reaction is alpha-D-ribose 1-phosphate = D-ribose 5-phosphate. It functions in the pathway carbohydrate degradation; 2-deoxy-D-ribose 1-phosphate degradation; D-glyceraldehyde 3-phosphate and acetaldehyde from 2-deoxy-alpha-D-ribose 1-phosphate: step 1/2. Isomerase that catalyzes the conversion of deoxy-ribose 1-phosphate (dRib-1-P) and ribose 1-phosphate (Rib-1-P) to deoxy-ribose 5-phosphate (dRib-5-P) and ribose 5-phosphate (Rib-5-P), respectively. The sequence is that of Phosphopentomutase from Vibrio cholerae serotype O1 (strain ATCC 39541 / Classical Ogawa 395 / O395).